Here is a 366-residue protein sequence, read N- to C-terminus: Aminomethyltransferase (366 aa).

It belongs to the GcvT family. In terms of assembly, the glycine cleavage system is composed of four proteins: P, T, L and H.

The catalysed reaction is N(6)-[(R)-S(8)-aminomethyldihydrolipoyl]-L-lysyl-[protein] + (6S)-5,6,7,8-tetrahydrofolate = N(6)-[(R)-dihydrolipoyl]-L-lysyl-[protein] + (6R)-5,10-methylene-5,6,7,8-tetrahydrofolate + NH4(+). Functionally, the glycine cleavage system catalyzes the degradation of glycine. The protein is Aminomethyltransferase of Bacillus cereus (strain G9842).